Here is a 394-residue protein sequence, read N- to C-terminus: Protein maelstrom (394 aa).

A DNA-binding region (HMG box) is located at residues 2 to 69 (APKKQNGFMM…ARRDKRGSLN (68 aa)). Residues 44 to 93 (TQQRGPYNSDAKDANAARRDKRGSLNGHGQVDKAQREAAESLMDKAQREA) form a disordered region. Residues 73 to 93 (QVDKAQREAAESLMDKAQREA) are compositionally biased toward basic and acidic residues.

The protein belongs to the maelstrom family.

Its subcellular location is the cytoplasm. It localises to the nucleus. Involved both in the piRNA and miRNA metabolic processes. As a component of the meiotic nuage, plays a central role during oogenesis by repressing transposable elements and preventing their mobilization, which is essential for the germline integrity. Repression of transposable elements is mediated via the piRNA metabolic process, which mediates the repression of transposable elements during meiosis by forming complexes composed of piRNAs and Piwi proteins and governs the repression of transposons. As a nuclear component, it is required for proper differentiation in the germline stem cell (GSC) lineage by repressing microRNA-7 (miR-7), thereby acting as an indirect regulator of bag-of-marbles (Bam). Acts by binding to the promoter of miR-7 gene and repressing its expression; miR-7 repression alleviates the Bam repression by miR-7, thereby allowing differentiation in the germline stem cell (GSC) lineage. This Drosophila sechellia (Fruit fly) protein is Protein maelstrom (mael).